An 857-amino-acid chain; its full sequence is DNA mismatch repair protein MutS (857 aa).

Position 621 to 628 (621 to 628) interacts with ATP; that stretch reads GPNMGGKS.

This sequence belongs to the DNA mismatch repair MutS family.

Its function is as follows. This protein is involved in the repair of mismatches in DNA. It is possible that it carries out the mismatch recognition step. This protein has a weak ATPase activity. This Francisella tularensis subsp. tularensis (strain SCHU S4 / Schu 4) protein is DNA mismatch repair protein MutS.